Reading from the N-terminus, the 256-residue chain is Imidazole glycerol phosphate synthase subunit HisF (256 aa).

Catalysis depends on residues aspartate 11 and aspartate 130.

It belongs to the HisA/HisF family. As to quaternary structure, heterodimer of HisH and HisF.

The protein resides in the cytoplasm. The enzyme catalyses 5-[(5-phospho-1-deoxy-D-ribulos-1-ylimino)methylamino]-1-(5-phospho-beta-D-ribosyl)imidazole-4-carboxamide + L-glutamine = D-erythro-1-(imidazol-4-yl)glycerol 3-phosphate + 5-amino-1-(5-phospho-beta-D-ribosyl)imidazole-4-carboxamide + L-glutamate + H(+). The protein operates within amino-acid biosynthesis; L-histidine biosynthesis; L-histidine from 5-phospho-alpha-D-ribose 1-diphosphate: step 5/9. Functionally, IGPS catalyzes the conversion of PRFAR and glutamine to IGP, AICAR and glutamate. The HisF subunit catalyzes the cyclization activity that produces IGP and AICAR from PRFAR using the ammonia provided by the HisH subunit. This is Imidazole glycerol phosphate synthase subunit HisF from Prochlorococcus marinus (strain MIT 9312).